Reading from the N-terminus, the 263-residue chain is 3-methyl-2-oxobutanoate hydroxymethyltransferase (263 aa).

Mg(2+) is bound by residues D44 and D83. Residues 44–45 (DS), D83, and K112 contribute to the 3-methyl-2-oxobutanoate site. E114 lines the Mg(2+) pocket. E181 functions as the Proton acceptor in the catalytic mechanism.

The protein belongs to the PanB family. Homodecamer; pentamer of dimers. Mg(2+) serves as cofactor.

The protein resides in the cytoplasm. The enzyme catalyses 3-methyl-2-oxobutanoate + (6R)-5,10-methylene-5,6,7,8-tetrahydrofolate + H2O = 2-dehydropantoate + (6S)-5,6,7,8-tetrahydrofolate. It participates in cofactor biosynthesis; (R)-pantothenate biosynthesis; (R)-pantoate from 3-methyl-2-oxobutanoate: step 1/2. Its function is as follows. Catalyzes the reversible reaction in which hydroxymethyl group from 5,10-methylenetetrahydrofolate is transferred onto alpha-ketoisovalerate to form ketopantoate. The polypeptide is 3-methyl-2-oxobutanoate hydroxymethyltransferase (Sulfurimonas denitrificans (strain ATCC 33889 / DSM 1251) (Thiomicrospira denitrificans (strain ATCC 33889 / DSM 1251))).